The chain runs to 245 residues: Thiamine phosphate phosphatase-like protein (245 aa).

Asp-9 (nucleophile) is an active-site residue. 3 residues coordinate Mg(2+): Asp-9, Asp-11, and Asp-179. The active-site Proton donor is the Asp-11.

It belongs to the HAD-like hydrolase superfamily. As to quaternary structure, monomer. Mg(2+) serves as cofactor.

The enzyme catalyses thiamine phosphate + H2O = thiamine + phosphate. Functionally, HAD-like hydrolase that has a thiamine monophosphate phosphatase activity in a heterologous system. Does not contribute to thiamine monophosphate phosphatase activity in planta. The protein is Thiamine phosphate phosphatase-like protein of Arabidopsis thaliana (Mouse-ear cress).